The following is a 140-amino-acid chain: Sperm protein associated with the nucleus on the X chromosome N3 (140 aa).

3 stretches are compositionally biased toward polar residues: residues 1–20, 62–79, and 131–140; these read MEQP…CKSN, INSN…SINP, and EGSSQDSGED. The tract at residues 1-140 is disordered; it reads MEQPTSSTNG…EGSSQDSGED (140 aa).

Belongs to the SPAN-X family.

In Pan troglodytes (Chimpanzee), this protein is Sperm protein associated with the nucleus on the X chromosome N3 (SPANXN3).